Here is a 355-residue protein sequence, read N- to C-terminus: MFDRLESVAQKFRKLEEDLSNPELLANQKEYQKIAREHAEIAPIVEAYGLYKGLHRQLLDNQQLLEQETDPEMRELFRQEIAELKRQIEDTENGLKLMLAPRDPNDDKNVILEIRAGTGGEEAALFVSDLFRMYTRYAELRRWKVEILDSHQTGIGGLKEVIAAVNGQGAYSRLKFERGVHRVQRVPVTESQGRIHTSAVTVAVLPEAEEVDVYIDPNDLRVDVFRSSGPGGQSVNTTDSAVRVTHIPSGLVVICQDEKSQHKNKAKALKVLRARLLDQMQSEQEARIARDRKSQVGTGDRSERIRTYNFPQNRVSDHRINLTLYKLDIILGGALDEIIDPLSTHFQAEALRREE.

Glutamine 233 bears the N5-methylglutamine mark.

The protein belongs to the prokaryotic/mitochondrial release factor family. Post-translationally, methylated by PrmC. Methylation increases the termination efficiency of RF1.

It is found in the cytoplasm. In terms of biological role, peptide chain release factor 1 directs the termination of translation in response to the peptide chain termination codons UAG and UAA. The protein is Peptide chain release factor 1 of Syntrophobacter fumaroxidans (strain DSM 10017 / MPOB).